The sequence spans 976 residues: Protein PLASTID MOVEMENT IMPAIRED 1-RELATED 2 (976 aa).

Residues 81–229 (IAHFGQRRFD…VLNLSFDYSV (149 aa)) form the C2 NT-type domain. Basic and acidic residues predominate over residues 309-319 (KQAADSDDSGK). Disordered regions lie at residues 309–343 (KQAA…ESSR) and 381–419 (NLLP…STEK). Residues 394–414 (STFSSQVISESSESKSPSAMD) are compositionally biased toward low complexity.

Its function is as follows. Seems not necessary for chloroplast and nuclear photorelocation movements. This is Protein PLASTID MOVEMENT IMPAIRED 1-RELATED 2 from Arabidopsis thaliana (Mouse-ear cress).